We begin with the raw amino-acid sequence, 873 residues long: Zinc fingers and homeoboxes protein 1 (873 aa).

Residues 1-63 are disordered; the sequence is MASRRKSTTP…ESVDSDNQQN (63 aa). Positions 18 to 30 are enriched in acidic residues; it reads QDPDLELISDLDE. Thr36 carries the phosphothreonine modification. A phosphoserine mark is found at Ser45, Ser47, and Ser48. 2 C2H2-type zinc fingers span residues 70-93 and 102-125; these read YECKYCTFQTPDLNMFTFHVDSEH and YVCVECNFLTKRYDALSEHNLKYH. Lys159 participates in a covalent cross-link: Glycyl lysine isopeptide (Lys-Gly) (interchain with G-Cter in SUMO2). Ser202 bears the Phosphoserine mark. The segment at 202 to 236 is disordered; the sequence is SVEDVPEEKENEIKPDREEIVENPSSSASESNTST. Basic and acidic residues predominate over residues 212–221; that stretch reads NEIKPDREEI. Over residues 223–236 the composition is skewed to low complexity; sequence ENPSSSASESNTST. Residues 272 to 432 are required for dimerization; it reads NSNLIPKVLI…QNNVQKSQVP (161 aa). The interval 272-564 is required for interaction with NFYA; the sequence is NSNLIPKVLI…AQPKQSWNPF (293 aa). Residues 284-346 constitute a DNA-binding region (homeobox 1); the sequence is NSIPTYNAAL…LKHGVSWTPE (63 aa). Glycyl lysine isopeptide (Lys-Gly) (interchain with G-Cter in SUMO2) cross-links involve residues Lys441, Lys454, Lys485, and Lys629. 2 consecutive DNA-binding regions (homeobox) follow at residues 464–526 and 569–630; these read SFGI…KSNQ and PQKF…EEKM. 2 disordered regions span residues 626–667 and 732–769; these read KEEK…ICKK and SSMNGLSSLRKRGRGRPKGRGRGRPRGRPRGSKRINNW. Ser648 carries the phosphoserine modification. A DNA-binding region (homeobox 4) is located at residues 660–722; that stretch reads STGKICKKTP…YAWKNGNLKW (63 aa). The required for nuclear localization stretch occupies residues 734–768; sequence MNGLSSLRKRGRGRPKGRGRGRPRGRPRGSKRINN. Residues 740–764 show a composition bias toward basic residues; sequence LRKRGRGRPKGRGRGRPRGRPRGSK. Ser774 carries the phosphoserine modification. The segment at residues 777-832 is a DNA-binding region (homeobox 5); that stretch reads KFKTGTAILKDYYLKHKFLNEQDLDELVNKSHMGYEQVREWFAERQRRSELGIELF. The disordered stretch occupies residues 829 to 873; it reads IELFEENEEEDEVIDDQEEDEEETDDSDTWEPPRHVKRKLSKSDD. The segment covering 831–857 has biased composition (acidic residues); that stretch reads LFEENEEEDEVIDDQEEDEEETDDSDT. Residues 831 to 873 are required for repressor activity; it reads LFEENEEEDEVIDDQEEDEEETDDSDTWEPPRHVKRKLSKSDD. Residues 863-873 show a composition bias toward basic residues; it reads HVKRKLSKSDD.

It belongs to the ZHX family. As to quaternary structure, forms homodimers. Also forms heterodimers with ZHX3 which is a prerequisite for repressor activity and with ZHX2. Interacts with NFYA. Interacts with ATF7IP.

The protein resides in the nucleus. In terms of biological role, acts as a transcriptional repressor. This chain is Zinc fingers and homeoboxes protein 1 (ZHX1), found in Gorilla gorilla gorilla (Western lowland gorilla).